Reading from the N-terminus, the 342-residue chain is Ferredoxin--NADP reductase (342 aa).

Residues C17, D36, Q44, Y49, I89, F124, D289, and T330 each coordinate FAD.

This sequence belongs to the ferredoxin--NADP reductase type 2 family. As to quaternary structure, homodimer. The cofactor is FAD.

It catalyses the reaction 2 reduced [2Fe-2S]-[ferredoxin] + NADP(+) + H(+) = 2 oxidized [2Fe-2S]-[ferredoxin] + NADPH. The sequence is that of Ferredoxin--NADP reductase from Rhodopseudomonas palustris (strain HaA2).